Consider the following 981-residue polypeptide: MTMPLPSIEQTLIQLADNLITHFPEQFNSQIYQQIQKDISNIKTPVGALMRAVSMSDFVTEILQKQPHFLAECWHKTPQLADCDSYAARLSVQLADIREETGLYKTLRDFRNQEMAKLSICQSLNSATVEEIFIRLSQLAEALIIGARDWLYQRACLDWGTPTDNQGNVQQLYILGMGKLGGFELNFSSDIDLIFTYPANGETVGSRKPIDNQKFFTRLGQRLISALDEFTEDGFVYRTDMRLRPFGDSGALALSFNAMESYYQEQGRDWERYAMIKGRILGADEQDPNVKTLRQLLRPFIYRRYIDFSVIQSLRDMKSKIEREVLRRGLVDNIKLGAGGIREIEFIVQVFQLIRGGREISLQQHELLKLLPEIEKLNLITADQHQDLLQAYLFLRRVENVLQAINDKQTQLLPADELNRCRLISATCEFTQWDNNHRPQKIQYPIHDWESFYQVLQQHQQKVRSVFNNLIGFNNENEADDSDNAWSDFLDADLEQGEIADILAQQGVSEEERDEIIGRLEAFRHSVSHRSIGIRGREVLTQLMPLLLLQIFSNKKYRTLLPRMLNIVEKILTRTTYLELLLENPQALTQLIELCAKSQLIAEQVAQHPILLDELLDREALLNPPSFEQYPAELQQYLLRLPEDDDEQFITALRQFKQATLLRIAAADILGALPVMKVSDHLTFLAETILHTVVNLAWQQITARFGKPEHLQNNEKGFLVAGYGKLGGIELGYRSDLDLVFLCDEIHSGQTVGGKKVIDSHQFYLRLAQKIISIFSMTTSAGILYEVDLRLRPSGEAGPLCCSFKAFEDYQMNEAWTWEKQSLVRSRAVYGEPALREKFELIRTGILASPRDLTQLKIDVREMREKMYRHFAGADDNKFNIKKDQGGITDIEFIAQYLVLAHAPENPNLAYWSDNVRIFDIMAEHGIITLNEAEKLKNCYTGLRNQIHHLNLLGEPPIVSKEEFADERRFIHQIWQKLFFE.

Residues 1–473 (MTMPLPSIEQ…RSVFNNLIGF (473 aa)) form an adenylyl removase region. Residues 479 to 981 (ADDSDNAWSD…HQIWQKLFFE (503 aa)) form an adenylyl transferase region.

It belongs to the GlnE family. Requires Mg(2+) as cofactor.

The enzyme catalyses [glutamine synthetase]-O(4)-(5'-adenylyl)-L-tyrosine + phosphate = [glutamine synthetase]-L-tyrosine + ADP. It catalyses the reaction [glutamine synthetase]-L-tyrosine + ATP = [glutamine synthetase]-O(4)-(5'-adenylyl)-L-tyrosine + diphosphate. Involved in the regulation of glutamine synthetase GlnA, a key enzyme in the process to assimilate ammonia. When cellular nitrogen levels are high, the C-terminal adenylyl transferase (AT) inactivates GlnA by covalent transfer of an adenylyl group from ATP to specific tyrosine residue of GlnA, thus reducing its activity. Conversely, when nitrogen levels are low, the N-terminal adenylyl removase (AR) activates GlnA by removing the adenylyl group by phosphorolysis, increasing its activity. The regulatory region of GlnE binds the signal transduction protein PII (GlnB) which indicates the nitrogen status of the cell. The protein is Bifunctional glutamine synthetase adenylyltransferase/adenylyl-removing enzyme of Mannheimia succiniciproducens (strain KCTC 0769BP / MBEL55E).